The primary structure comprises 167 residues: ATP synthase subunit b (167 aa).

A helical transmembrane segment spans residues 15 to 37 (FWQTVIFLVTLYLLSKFAWGPIM).

It belongs to the ATPase B chain family. As to quaternary structure, F-type ATPases have 2 components, F(1) - the catalytic core - and F(0) - the membrane proton channel. F(1) has five subunits: alpha(3), beta(3), gamma(1), delta(1), epsilon(1). F(0) has three main subunits: a(1), b(2) and c(10-14). The alpha and beta chains form an alternating ring which encloses part of the gamma chain. F(1) is attached to F(0) by a central stalk formed by the gamma and epsilon chains, while a peripheral stalk is formed by the delta and b chains.

It is found in the cell inner membrane. Functionally, f(1)F(0) ATP synthase produces ATP from ADP in the presence of a proton or sodium gradient. F-type ATPases consist of two structural domains, F(1) containing the extramembraneous catalytic core and F(0) containing the membrane proton channel, linked together by a central stalk and a peripheral stalk. During catalysis, ATP synthesis in the catalytic domain of F(1) is coupled via a rotary mechanism of the central stalk subunits to proton translocation. Component of the F(0) channel, it forms part of the peripheral stalk, linking F(1) to F(0). This chain is ATP synthase subunit b, found in Cytophaga hutchinsonii (strain ATCC 33406 / DSM 1761 / CIP 103989 / NBRC 15051 / NCIMB 9469 / D465).